The primary structure comprises 178 residues: Large ribosomal subunit protein bL25 (178 aa).

It belongs to the bacterial ribosomal protein bL25 family. CTC subfamily. In terms of assembly, part of the 50S ribosomal subunit; part of the 5S rRNA/L5/L18/L25 subcomplex. Contacts the 5S rRNA. Binds to the 5S rRNA independently of L5 and L18.

This is one of the proteins that binds to the 5S RNA in the ribosome where it forms part of the central protuberance. The protein is Large ribosomal subunit protein bL25 of Nitratiruptor sp. (strain SB155-2).